A 94-amino-acid chain; its full sequence is Ammonia regulation of amino acid uptake protein (94 aa).

Repeats lie at residues 48-57 (HHQIRRRTHQ) and 58-67 (HHQIRRRTHQ).

Functionally, involved in ammonia regulation of the GAP1 permease. The sequence is that of Ammonia regulation of amino acid uptake protein (AUA1) from Saccharomyces cerevisiae (strain ATCC 204508 / S288c) (Baker's yeast).